We begin with the raw amino-acid sequence, 66 residues long: Cold shock-like protein CspLB (66 aa).

Residues 4–63 enclose the CSD domain; the sequence is GTVKWFNSEKGFGFIEVEGGDDVFVHFSAIEGEGFKTLDEGQSVEFEIVEGQRGPQAEKV.

As to quaternary structure, homodimer.

The protein localises to the cytoplasm. The polypeptide is Cold shock-like protein CspLB (cspLB) (Listeria monocytogenes serovar 1/2a (strain ATCC BAA-679 / EGD-e)).